Consider the following 233-residue polypeptide: MFAKTAAANLTKKGGLSLLSTTARRTKVTLPDLKWDFGALEPYISGQINELHYTKHHQTYVNGFNTAVDQFQELSDLLAKEPSPANARKMIAIQQNIKFHGGGFTNHCLFWENLAPESQGGGEPPTGALAKAIDEQFGSLDELIKLTNTKLAGVQGSGWAFIVKNLSNGGKLDVVQTYNQDTVTGPLVPLVAIDAWEHAYYLQYQNKKADYFKAIWNVVNWKEASRRFDAGKI.

The N-terminal 26 residues, 1–26, are a transit peptide targeting the mitochondrion; that stretch reads MFAKTAAANLTKKGGLSLLSTTARRT. 2 residues coordinate Mn(2+): H52 and H107. Phosphothreonine occurs at positions 147 and 149. Mn(2+) contacts are provided by D194 and H198.

This sequence belongs to the iron/manganese superoxide dismutase family. As to quaternary structure, homotetramer. The cofactor is Mn(2+).

The protein localises to the mitochondrion matrix. It carries out the reaction 2 superoxide + 2 H(+) = H2O2 + O2. Destroys superoxide anion radicals which are normally produced within the cells and which are toxic to biological systems. The chain is Superoxide dismutase [Mn], mitochondrial (SOD2) from Saccharomyces cerevisiae (strain ATCC 204508 / S288c) (Baker's yeast).